Reading from the N-terminus, the 536-residue chain is Atrial natriuretic peptide receptor 3 (536 aa).

The signal sequence occupies residues 1 to 26 (MRSLLLFTFSACVLLARVLLAGGASS). A propeptide spanning residues 27–40 (GAGDTRPGSRRRAR) is cleaved from the precursor. Over 41 to 478 (EALAAQKIEV…KSSGGLEESA (438 aa)) the chain is Extracellular. N-linked (GlcNAc...) asparagine glycosylation is present at Asn-81. Chloride contacts are provided by Ser-101, Val-130, and Cys-131. Disulfide bonds link Cys-103/Cys-131 and Cys-208/Cys-256. N-linked (GlcNAc...) asparagine glycans are attached at residues Asn-288 and Asn-389. Residues 479–499 (VTGIVVGALLGAGLLMAFYFF) form a helical membrane-spanning segment. Topologically, residues 500–536 (RKKYRITIERRNQQEESNIGKHRELREDSIRSHFSVA) are cytoplasmic.

The protein belongs to the ANF receptor family. In terms of assembly, homodimer; disulfide-linked. Interacts with OSTN.

Its subcellular location is the cell membrane. Its function is as follows. Receptor for the natriuretic peptide hormones, binding with similar affinities atrial natriuretic peptide NPPA/ANP, brain natriuretic peptide NPPB/BNP, and C-type natriuretic peptide NPPC/CNP. May function as a clearance receptor for NPPA, NPPB and NPPC, regulating their local concentrations and effects. Acts as a regulator of osteoblast differentiation and bone growth by binding to its ligand osteocrin, thereby preventing binding between NPR3/NPR-C and natriuretic peptides, leading to increase cGMP production. The polypeptide is Atrial natriuretic peptide receptor 3 (Npr3) (Mus musculus (Mouse)).